A 1138-amino-acid chain; its full sequence is Transmembrane channel-like protein 3 (1138 aa).

A compositionally biased stretch (low complexity) spans 1–15 (MEAAPGTAAAAAKPA). Disordered stretches follow at residues 1 to 20 (MEAAPGTAAAAAKPAKSCKK) and 29 to 54 (NIYTYQEPPHSNSDEDISEEKADSQD). The Cytoplasmic segment spans residues 1 to 155 (MEAAPGTAAA…VASYFIFLRW (155 aa)). The chain crosses the membrane as a helical span at residues 156–176 (LFGINIVLTIMTGAFVVLPEL). At 177-202 (LAGAPFGSTVSKTIRQEDLKTAQDLD) the chain is on the extracellular side. Residues 203–223 (TIWSLGGYLQYSVLFYGYYGS) form a helical membrane-spanning segment. At 224–233 (DRKIGKAGYR) the chain is on the cytoplasmic side. A helical transmembrane segment spans residues 234-254 (LPLAYFLVGMAVFAYSFIILL). The Extracellular portion of the chain corresponds to 255 to 327 (KKMAKNSRMS…KNLAVTISLR (73 aa)). Asparagine 272 is a glycosylation site (N-linked (GlcNAc...) asparagine). A helical transmembrane segment spans residues 328-348 (IIANILVLLSLTGSIYIIYFV). The Cytoplasmic portion of the chain corresponds to 349-369 (VDRSQKLENNKRELTLWEKNE). The helical transmembrane segment at 370–390 (VSVVVSLITMIAPSAFELVAA) threads the bilayer. At 391 to 401 (LEMYHPRTTLR) the chain is on the extracellular side. A helical transmembrane segment spans residues 402 to 422 (FQLARVLVLYLGNLYSLIIAL). Residues 423–508 (LDKVNSMSVT…CWETYVGQEM (86 aa)) lie on the Cytoplasmic side of the membrane. The chain crosses the membrane as a helical span at residues 509 to 529 (LKLSIIDMIFTVASILLIDFF). Residues 530–569 (RGLCVRYLSDCWCWDLESKFPEYGEFKIAENVLHLVYNQG) are Extracellular-facing. Residues 570–590 (MIWMGAFFSPCLPAFNVLKLI) traverse the membrane as a helical segment. The Cytoplasmic portion of the chain corresponds to 591–618 (GLMYLRSWAVLTCNVPHQQVFRASRSNN). A helical membrane pass occupies residues 619–639 (FYLAMLLFMLFLCMLPTIFAI). Residues 640–676 (ARYKPSLSCGPFSGQEKIYDIVSETIQNDFPAWFNSV) lie on the Extracellular side of the membrane. The helical transmembrane segment at 677–697 (IAYISSPVVVLPALLLLFMLI) threads the bilayer. Residues 698–1138 (YYLQSIARSL…EPNELVCSNV (441 aa)) are Cytoplasmic-facing. Residues 753–763 (NSEGTRFQSLD) are compositionally biased toward polar residues. Disordered regions lie at residues 753-859 (NSEG…RYPS), 973-1005 (SPHPSEDEEDEEALGRHYVKRSHRPRSLSDLRP), and 1065-1095 (PKTKHMLEQSLTESDSVSIESSSDPQNSSND). Residues 764-773 (GSDKRPDKDG) are compositionally biased toward basic and acidic residues. Composition is skewed to polar residues over residues 777 to 795 (SQESSVRASTPRKNGSVLN) and 804 to 813 (TRIQTISQTV). Residues 828 to 845 (TTPTTSASLTPAPSVSSA) are compositionally biased toward low complexity. The segment covering 989-998 (HYVKRSHRPR) has biased composition (basic residues). The segment covering 1074–1095 (SLTESDSVSIESSSDPQNSSND) has biased composition (low complexity).

The protein belongs to the TMC family. Expressed in a range of tissues including cerebrum, cerebellum, retina, cochlea, lung, liver and heart. Also expressed in the apical, medial and basal portions of the basillar papilla.

The protein resides in the membrane. Functionally, probable component of an ion channel. This Gallus gallus (Chicken) protein is Transmembrane channel-like protein 3.